Reading from the N-terminus, the 38-residue chain is Small toxic protein BsrG (38 aa).

A helical transmembrane segment spans residues 11–31; that stretch reads INFGGLILNTVLLIFNIMMIV.

It is found in the cell membrane. Functionally, toxic component of a type I toxin-antitoxin (TA) system; expression in the absence of cognate antisense antitoxin SR4 RNA leads to cell lysis. Induced expression causes membrane invaginations that dislocate the cell wall synthesis machinery, leading to eventual death. Unlike many type I TA systems it does not form pores. Base pairing occurs between the 3' UTRs of bsrG mRNA and SR4 RNA, which leads to initiation of degradation by RNase III (rnc) followed by the action of RNase Y (rny) and RNase R (rnr). Not toxic when expressed in E.coli. When induced during logarithmic growth it only slowly exerts its toxic effect. Expression during log growth leads to significant disturbances of cell envelope biosynthesis and cell morphology, causing cell membrane invaginations and delocalization of cell division and cell wall synthesis machinery. Cell lysis depends on mreB, lytC and lytD, suggesting expression of bsrG triggers autolysis rather than disintegration of the membrane. Additionally expression of bsrG also inhibits transcription. This Bacillus subtilis (strain 168) protein is Small toxic protein BsrG.